We begin with the raw amino-acid sequence, 205 residues long: Large ribosomal subunit protein uL3c (205 aa).

Residues 129–154 are disordered; it reads SRGPMSHGSKNHRQPGSIGAGTTPGR.

The protein belongs to the universal ribosomal protein uL3 family. As to quaternary structure, part of the 50S ribosomal subunit.

The protein localises to the plastid. It localises to the chloroplast. Functionally, one of the primary rRNA binding proteins, it binds directly near the 3'-end of the 23S rRNA, where it nucleates assembly of the 50S subunit. The polypeptide is Large ribosomal subunit protein uL3c (rpl3) (Pyropia yezoensis (Susabi-nori)).